A 427-amino-acid polypeptide reads, in one-letter code: MKLLIKGGTVVDPVAGKIEEKDVFIVDGKIARAGAHVNTAGAEVLDASGKLVVPGLIDMHVHLREPGFEARETIYTGTRAAARGGFTSVACMPNTSPVADNGAVISFIKACGLKGAVNVYPIGAITRGSKGEELAEMGDMKEAGAVAFSDDGMPVMNAGLMRRALQYAGMLGMVVISHCEDKNLSAGGVMHEGYVSTMLGLKGIPASAEEVMVARDILLAEETGSRVHIAHVSTAGSVRLIREAKARGVRVTAEVAPHHFTLTDEAVLGYDTSTKVNPPLRSAGDVAAVREGLADGTIDVIATDHAPHTEEEKDVEYDLAPFGMVGLETAVGLVWTELVAAGVLTPLQAVVKMTLNPARVLGIPKGTLEPGADADITIIDPDLSEPVDPARFASKGRNTPFRGRLLKGLPWATIVGGRVVMQDRVIR.

Zn(2+) is bound by residues His60 and His62. Residues 62-64 (HLR) and Asn94 each bind substrate. Residues Asp151, His178, and His231 each coordinate Zn(2+). Asn277 provides a ligand contact to substrate. Residue Asp304 participates in Zn(2+) binding. Residue Asp304 is part of the active site. Substrate contacts are provided by residues His308 and 322–323 (FG).

This sequence belongs to the metallo-dependent hydrolases superfamily. DHOase family. Class I DHOase subfamily. Requires Zn(2+) as cofactor.

The catalysed reaction is (S)-dihydroorotate + H2O = N-carbamoyl-L-aspartate + H(+). Its pathway is pyrimidine metabolism; UMP biosynthesis via de novo pathway; (S)-dihydroorotate from bicarbonate: step 3/3. Catalyzes the reversible cyclization of carbamoyl aspartate to dihydroorotate. The sequence is that of Dihydroorotase from Pelotomaculum thermopropionicum (strain DSM 13744 / JCM 10971 / SI).